The chain runs to 211 residues: Cytochrome c biogenesis ATP-binding export protein CcmA (211 aa).

Residues 17 to 209 (LDVEDVTVFR…PSLAHVESFW (193 aa)) enclose the ABC transporter domain. Residue 49-56 (GPNGAGKS) participates in ATP binding.

Belongs to the ABC transporter superfamily. CcmA exporter (TC 3.A.1.107) family. In terms of assembly, the complex is composed of two ATP-binding proteins (CcmA) and two transmembrane proteins (CcmB).

Its subcellular location is the cell inner membrane. It carries out the reaction heme b(in) + ATP + H2O = heme b(out) + ADP + phosphate + H(+). Its function is as follows. Part of the ABC transporter complex CcmAB involved in the biogenesis of c-type cytochromes; once thought to export heme, this seems not to be the case, but its exact role is uncertain. Responsible for energy coupling to the transport system. This Gluconobacter oxydans (strain 621H) (Gluconobacter suboxydans) protein is Cytochrome c biogenesis ATP-binding export protein CcmA.